The primary structure comprises 851 residues: MAKTNISPGMQQYLDIKKDYPDAFLLFRMGDFYELFYEDAVKAAQLLEIGLTSRNKNAENPIPMAGVPHHSAQQYIDVLIELGYKVAVAEQMEDPKQAVGVVKREVVQVITPGTVVDSAKPDSANNFLVAVDFDGCRYGLAYMDVSTGEFCVTDLADFTSVRSEIQNLKAKEVLLGFDLSEEEQTILVKQMNLLLSYEETVYEDKSLIDGQLTTVELTAAGKLLQYVHKTQMRELSHLQALVHYEIKDYLQMSYATKSSLDLVENARTNKKHGSLYWLLDETKTAMGMRLLRSWIDRPLVSKEAILERQEIIQVFLNAFIERTDLSNSLKGVYDIERLSSRVSFGKANPKDLLQLGHTLAQVPYIKAILESFDSPCVDKLVNDIDSLPELEYLIRTAIDPDAPATISEGSIIRTGFDERLDHYRKVMREGTGWIADIEAKERQASGINNLKIDYNKKDGYYFHVTNSNLSLVPEHFFRKATLKNSERYGTAELAKIEGQMLEAREESSSLEYDIFMCIRAQVETYINRLQKLAKILATVDVLQSLAVVAETNHYIRPQFNDNHVITIQEGRHAVVEKVMGVQEYIPNSISFDQQTSIQLITGPNMSGKSTYMRQLALTVIMAQMGSFVAADHVDLPLFDAIFTRIGAADDLISGQSTFMVEMMEANQAIKRASDNSLILFDELGRGTATYDGMALAQAIIEYIHDRVGAKTIFATHYHELTDLSTKLTSLVNVHVATLEKDGDVTFLHKIAEGPADKSYGIHVAKIAGLPKSLLKRADEVLTRLETQSRSTEIISVPSQVESSSAVRQGQLSLFGDEEKAHEIRQALEAIDVMNMTPLQAMTTLYELKKLL.

602 to 609 (GPNMSGKS) serves as a coordination point for ATP.

This sequence belongs to the DNA mismatch repair MutS family.

Functionally, this protein is involved in the repair of mismatches in DNA. It is possible that it carries out the mismatch recognition step. This protein has a weak ATPase activity. This is DNA mismatch repair protein MutS from Streptococcus pyogenes serotype M28 (strain MGAS6180).